The following is a 670-amino-acid chain: DNA ligase (670 aa).

NAD(+)-binding positions include 32 to 36, 81 to 82, and Glu113; these read DAEYD and SL. Lys115 functions as the N6-AMP-lysine intermediate in the catalytic mechanism. Residues Arg136, Glu173, Lys290, and Lys314 each coordinate NAD(+). Zn(2+)-binding residues include Cys408, Cys411, Cys426, and Cys432. A BRCT domain is found at 592 to 670; the sequence is ESDSPFAGKT…EAEMIRLLGE (79 aa).

It belongs to the NAD-dependent DNA ligase family. LigA subfamily. Requires Mg(2+) as cofactor. Mn(2+) serves as cofactor.

The catalysed reaction is NAD(+) + (deoxyribonucleotide)n-3'-hydroxyl + 5'-phospho-(deoxyribonucleotide)m = (deoxyribonucleotide)n+m + AMP + beta-nicotinamide D-nucleotide.. In terms of biological role, DNA ligase that catalyzes the formation of phosphodiester linkages between 5'-phosphoryl and 3'-hydroxyl groups in double-stranded DNA using NAD as a coenzyme and as the energy source for the reaction. It is essential for DNA replication and repair of damaged DNA. This is DNA ligase from Yersinia pestis bv. Antiqua (strain Antiqua).